We begin with the raw amino-acid sequence, 139 residues long: 3-hydroxyacyl-[acyl-carrier-protein] dehydratase FabZ (139 aa).

H46 is an active-site residue.

The protein belongs to the thioester dehydratase family. FabZ subfamily.

The protein localises to the cytoplasm. The enzyme catalyses a (3R)-hydroxyacyl-[ACP] = a (2E)-enoyl-[ACP] + H2O. Its function is as follows. Involved in unsaturated fatty acids biosynthesis. Catalyzes the dehydration of short chain beta-hydroxyacyl-ACPs and long chain saturated and unsaturated beta-hydroxyacyl-ACPs. This chain is 3-hydroxyacyl-[acyl-carrier-protein] dehydratase FabZ, found in Streptococcus pyogenes serotype M1.